We begin with the raw amino-acid sequence, 336 residues long: Aspartate carbamoyltransferase catalytic subunit (336 aa).

R71 and T72 together coordinate carbamoyl phosphate. K99 serves as a coordination point for L-aspartate. Carbamoyl phosphate contacts are provided by R121, H151, and Q154. The L-aspartate site is built by R184 and R239. G280 and P281 together coordinate carbamoyl phosphate.

This sequence belongs to the aspartate/ornithine carbamoyltransferase superfamily. ATCase family. In terms of assembly, heterododecamer (2C3:3R2) of six catalytic PyrB chains organized as two trimers (C3), and six regulatory PyrI chains organized as three dimers (R2).

The catalysed reaction is carbamoyl phosphate + L-aspartate = N-carbamoyl-L-aspartate + phosphate + H(+). Its pathway is pyrimidine metabolism; UMP biosynthesis via de novo pathway; (S)-dihydroorotate from bicarbonate: step 2/3. In terms of biological role, catalyzes the condensation of carbamoyl phosphate and aspartate to form carbamoyl aspartate and inorganic phosphate, the committed step in the de novo pyrimidine nucleotide biosynthesis pathway. The polypeptide is Aspartate carbamoyltransferase catalytic subunit (Azotobacter vinelandii (strain DJ / ATCC BAA-1303)).